Reading from the N-terminus, the 348-residue chain is Phosphate acyltransferase (348 aa).

It belongs to the PlsX family. In terms of assembly, homodimer. Probably interacts with PlsY.

It localises to the cytoplasm. It carries out the reaction a fatty acyl-[ACP] + phosphate = an acyl phosphate + holo-[ACP]. It functions in the pathway lipid metabolism; phospholipid metabolism. Catalyzes the reversible formation of acyl-phosphate (acyl-PO(4)) from acyl-[acyl-carrier-protein] (acyl-ACP). This enzyme utilizes acyl-ACP as fatty acyl donor, but not acyl-CoA. In Rhizobium leguminosarum bv. trifolii (strain WSM2304), this protein is Phosphate acyltransferase.